Reading from the N-terminus, the 180-residue chain is Small ribosomal subunit protein uS5 (180 aa).

Positions 24 to 87 (MIEKLVAVNR…EQARKNLATV (64 aa)) constitute an S5 DRBM domain.

It belongs to the universal ribosomal protein uS5 family. In terms of assembly, part of the 30S ribosomal subunit. Contacts proteins S4 and S8.

In terms of biological role, with S4 and S12 plays an important role in translational accuracy. Located at the back of the 30S subunit body where it stabilizes the conformation of the head with respect to the body. The protein is Small ribosomal subunit protein uS5 of Xanthomonas axonopodis pv. citri (strain 306).